A 195-amino-acid chain; its full sequence is BAG family molecular chaperone regulator 1A (195 aa).

The region spanning 6-72 is the Ubiquitin-like domain; it reads STVTIHYGNQ…KLGLKNHSKI (67 aa). The disordered stretch occupies residues 78 to 98; it reads HKQQRGSKEKDTVEPAPKAEA. Over residues 83 to 98 the composition is skewed to basic and acidic residues; sequence GSKEKDTVEPAPKAEA. In terms of domain architecture, BAG spans 109–190; that stretch reads EIKAIDQYVD…KMLDHVDQTS (82 aa).

Binds to the ATPase domain of HSP70/HSC chaperones.

Inhibits the chaperone activity of HSP70/HSC70 by promoting substrate release. In Schizosaccharomyces pombe (strain 972 / ATCC 24843) (Fission yeast), this protein is BAG family molecular chaperone regulator 1A (bag101).